The primary structure comprises 541 residues: ATP synthase subunit alpha (541 aa).

ATP is bound at residue 173 to 180 (GDRQTGKT). A compositionally biased stretch (basic and acidic residues) spans 517 to 527 (GIEPGVEEHES). Positions 517–541 (GIEPGVEEHESLGATAVNQETIVKK) are disordered. Polar residues predominate over residues 532 to 541 (AVNQETIVKK).

Belongs to the ATPase alpha/beta chains family. In terms of assembly, F-type ATPases have 2 components, CF(1) - the catalytic core - and CF(0) - the membrane proton channel. CF(1) has five subunits: alpha(3), beta(3), gamma(1), delta(1), epsilon(1). CF(0) has three main subunits: a(1), b(2) and c(9-12). The alpha and beta chains form an alternating ring which encloses part of the gamma chain. CF(1) is attached to CF(0) by a central stalk formed by the gamma and epsilon chains, while a peripheral stalk is formed by the delta and b chains.

The protein resides in the cell membrane. The catalysed reaction is ATP + H2O + 4 H(+)(in) = ADP + phosphate + 5 H(+)(out). Produces ATP from ADP in the presence of a proton gradient across the membrane. The alpha chain is a regulatory subunit. The sequence is that of ATP synthase subunit alpha from Kocuria rhizophila (strain ATCC 9341 / DSM 348 / NBRC 103217 / DC2201).